The sequence spans 121 residues: Probable intron-encoded DNA endonuclease aI1 (121 aa).

The protein belongs to the LAGLIDADG endonuclease family.

The protein localises to the mitochondrion. In terms of biological role, mitochondrial DNA endonuclease involved in intron homing. The chain is Probable intron-encoded DNA endonuclease aI1 (aI1) from Mycosarcoma maydis (Corn smut fungus).